A 331-amino-acid chain; its full sequence is Biotin synthase (331 aa).

One can recognise a Radical SAM core domain in the interval Pro52–Arg277. [4Fe-4S] cluster contacts are provided by Cys67, Cys71, and Cys74. Positions 110, 143, 202, and 272 each coordinate [2Fe-2S] cluster.

This sequence belongs to the radical SAM superfamily. Biotin synthase family. Homodimer. [4Fe-4S] cluster is required as a cofactor. Requires [2Fe-2S] cluster as cofactor.

It carries out the reaction (4R,5S)-dethiobiotin + (sulfur carrier)-SH + 2 reduced [2Fe-2S]-[ferredoxin] + 2 S-adenosyl-L-methionine = (sulfur carrier)-H + biotin + 2 5'-deoxyadenosine + 2 L-methionine + 2 oxidized [2Fe-2S]-[ferredoxin]. It functions in the pathway cofactor biosynthesis; biotin biosynthesis; biotin from 7,8-diaminononanoate: step 2/2. Functionally, catalyzes the conversion of dethiobiotin (DTB) to biotin by the insertion of a sulfur atom into dethiobiotin via a radical-based mechanism. The chain is Biotin synthase from Mycolicibacterium vanbaalenii (strain DSM 7251 / JCM 13017 / BCRC 16820 / KCTC 9966 / NRRL B-24157 / PYR-1) (Mycobacterium vanbaalenii).